The following is a 652-amino-acid chain: Fimbrin-4 (652 aa).

Calponin-homology (CH) domains lie at 116-233 (ESEK…KIQL), 261-364 (LAPE…HHRN), 388-494 (SREE…RYTM), and 509-617 (DITE…NWSL). 2 actin-binding regions span residues 116 to 364 (ESEK…HHRN) and 388 to 617 (SREE…NWSL). Positions 623 to 652 (TESTVSDDTDVSSVTEEISNLSTDDGSSDV) are disordered. The span at 640 to 652 (ISNLSTDDGSSDV) shows a compositional bias: polar residues.

As to quaternary structure, interacts with F-actin.

The protein resides in the cytoplasm. Its subcellular location is the cytoskeleton. Functionally, cross-links actin filaments (F-actin). Stabilizes and prevents F-actin depolymerization mediated by profilin. May regulate actin cytoarchitecture, cell cycle, cell division, cell elongation and cytoplasmic tractus. The polypeptide is Fimbrin-4 (Arabidopsis thaliana (Mouse-ear cress)).